Here is a 205-residue protein sequence, read N- to C-terminus: MQAPPSFYEGDTLEVAKKLLGQKLVHIVDGIKRSGIIVEVEAYKGPDDKAAHSYGGRRTDRTEVMFGAPGHAYVYLIYGMYHCFNVITAPVGTPQGVLIRALEPVDGIAEIKLARYNKTEITKAQYKNLTNGPGKLCRALGITLKERGVSLQNDTLHIELVPKEEHISSQYKITAGPRINIDYAEEAVHYPWRFYYEGHPFVSKK.

Belongs to the DNA glycosylase MPG family.

The sequence is that of Putative 3-methyladenine DNA glycosylase from Bacillus cereus (strain B4264).